The following is a 276-amino-acid chain: 2,3,4,5-tetrahydropyridine-2,6-dicarboxylate N-succinyltransferase (276 aa).

Positions 107 and 144 each coordinate substrate.

Belongs to the transferase hexapeptide repeat family. Homotrimer.

The protein localises to the cytoplasm. It carries out the reaction (S)-2,3,4,5-tetrahydrodipicolinate + succinyl-CoA + H2O = (S)-2-succinylamino-6-oxoheptanedioate + CoA. It functions in the pathway amino-acid biosynthesis; L-lysine biosynthesis via DAP pathway; LL-2,6-diaminopimelate from (S)-tetrahydrodipicolinate (succinylase route): step 1/3. The protein is 2,3,4,5-tetrahydropyridine-2,6-dicarboxylate N-succinyltransferase of Gluconobacter oxydans (strain 621H) (Gluconobacter suboxydans).